The primary structure comprises 151 residues: Small ribosomal subunit protein bS6 (151 aa).

The disordered stretch occupies residues 94 to 151 (EEHEQGPSAMMRKRDDDDRGERGERPRGPRPERGERGERGERGPRRPREDNIGEEGLY). The segment covering 105–144 (RKRDDDDRGERGERPRGPRPERGERGERGERGPRRPREDN) has biased composition (basic and acidic residues).

The protein belongs to the bacterial ribosomal protein bS6 family.

In terms of biological role, binds together with bS18 to 16S ribosomal RNA. The chain is Small ribosomal subunit protein bS6 from Beijerinckia indica subsp. indica (strain ATCC 9039 / DSM 1715 / NCIMB 8712).